The chain runs to 2197 residues: uncharacterized protein (2197 aa).

Residue S2 is modified to N-acetylserine. Residues 2159 to 2195 (TIPFLAELLEDVELSVKSLAQDIIKQMEEMSGESLAE) form an HEAT repeat.

This sequence belongs to the HEATR1/UTP10 family.

It is found in the nucleus. The protein resides in the nucleolus. Functionally, involved in nucleolar processing of pre-18S ribosomal RNA. Involved in ribosome biosynthesis. This is an uncharacterized protein from Arabidopsis thaliana (Mouse-ear cress).